The sequence spans 132 residues: Small ribosomal subunit protein uS8 (132 aa).

Belongs to the universal ribosomal protein uS8 family. As to quaternary structure, part of the 30S ribosomal subunit. Contacts proteins S5 and S12.

Functionally, one of the primary rRNA binding proteins, it binds directly to 16S rRNA central domain where it helps coordinate assembly of the platform of the 30S subunit. This chain is Small ribosomal subunit protein uS8, found in Xanthomonas oryzae pv. oryzae (strain MAFF 311018).